Consider the following 1053-residue polypeptide: Integrin alpha-3 (1053 aa).

A signal peptide spans 1–32 (MGPGPCRVPRAPGWLLRALALMVAACGRVAFA). Residues 33 to 993 (FNLDTRFLVV…LVEELPAEIE (961 aa)) lie on the Extracellular side of the membrane. FG-GAP repeat units follow at residues 38-103 (RFLV…KDDC), 110-171 (EKSD…DLQL), 185-235 (CNSN…WDLS), 236-293 (EYSY…GGDL), 294-355 (QRKQ…ASFP), 357-412 (QPSL…GLLR), and 416-478 (QIIH…VARP). Residue N86 is glycosylated (N-linked (GlcNAc...) asparagine). Cystine bridges form between C94/C103, C140/C162, and C185/C197. Disulfide bonds link C486–C491 and C497–C551. N-linked (GlcNAc...) asparagine glycosylation is found at N501, N512, N574, and N606. Residues C616 and C622 are joined by a disulfide bond. N-linked (GlcNAc...) asparagine glycosylation is found at N657, N699, N843, and N859. The cysteines at positions 695 and 704 are disulfide-linked. 2 disulfide bridges follow: C848–C906 and C913–C918. The tract at residues 865-890 (PGVTPLSPQRRRRQLDPGGDQSSPPV) is disordered. N-linked (GlcNAc...) asparagine glycans are attached at residues N925, N928, N937, and N971. A helical membrane pass occupies residues 994-1021 (LWLVLVAVGAGLLLLGLIILLLWKCGFF). C1018 carries S-palmitoyl cysteine lipidation. Residues 1022-1053 (KRARTRALYEAKRQKAEMKSQPSETERLTDDY) lie on the Cytoplasmic side of the membrane.

Belongs to the integrin alpha chain family. Heterodimer of an alpha and a beta subunit. The alpha subunit is composed of a heavy and a light chain linked by a disulfide bond. Alpha-3 associates with beta-1. Interacts with HPS5. Interacts with FAP (seprase); the interaction occurs at the cell surface of invadopodia membrane in a collagen-dependent manner. Isoform 1 and isoform 2 are expressed in heart and brain. Only isoform 1 is detected in lung.

Its subcellular location is the cell membrane. The protein resides in the cell projection. The protein localises to the invadopodium membrane. It is found in the filopodium membrane. In terms of biological role, integrin alpha-3/beta-1 is a receptor for fibronectin, laminin, collagen, epiligrin, thrombospondin and CSPG4. Integrin alpha-3/beta-1 provides a docking site for FAP (seprase) at invadopodia plasma membranes in a collagen-dependent manner and hence may participate in the adhesion, formation of invadopodia and matrix degradation processes, promoting cell invasion. Alpha-3/beta-1 may mediate with LGALS3 the stimulation by CSPG4 of endothelial cells migration. In Mus musculus (Mouse), this protein is Integrin alpha-3 (Itga3).